The chain runs to 648 residues: Threonine--tRNA ligase (648 aa).

Residues 1–63 enclose the TGS domain; sequence MSQISLTFPD…AASGRIAINT (63 aa). The catalytic stretch occupies residues 247–544; it reads DHRKLGREME…LIENYSGKLP (298 aa). Residues Cys-344, His-395, and His-521 each coordinate Zn(2+).

Belongs to the class-II aminoacyl-tRNA synthetase family. Homodimer. The cofactor is Zn(2+).

The protein resides in the cytoplasm. It catalyses the reaction tRNA(Thr) + L-threonine + ATP = L-threonyl-tRNA(Thr) + AMP + diphosphate + H(+). Catalyzes the attachment of threonine to tRNA(Thr) in a two-step reaction: L-threonine is first activated by ATP to form Thr-AMP and then transferred to the acceptor end of tRNA(Thr). Also edits incorrectly charged L-seryl-tRNA(Thr). In Paracoccus denitrificans (strain Pd 1222), this protein is Threonine--tRNA ligase.